Reading from the N-terminus, the 410-residue chain is MDIRGNVHRFVKFYIDGWKHFRDPTMESSYSAVYYWREQMKAMFLYTTSKERQMPYRSSWHTLVIIQATVCFLTMCYGVTESLGDKVQMGRDIAFIIGFFYIAFKIYYFQWYGDELDEVVEALETFHPWAQKGPGAVDYRTAKRWYFTLAFFLASSWLVFLCIFILLLITSPLWVHQQILPLHAAFPFQWHEKSIHPISHAFIYLFQTWNVMYFLTWLVCIEGLSVSIYVEITFAIEVLCLELRHLHQRCHGYEQLRLETNRLVQFHQKIVHILDHTNKVFHGTLIMQMGVNFFLVSLSVLEAMEARKDPKVVAQFAVLMLLALGHLSMWSYFGDLLSQKSLTISEAAYEAYDPIKGSKDVYRDLCLIIRRGQEPLIMRASPFPSFNFINYSAILNQCYGILTFLLKTLD.

Residues 1 to 59 lie on the Cytoplasmic side of the membrane; it reads MDIRGNVHRFVKFYIDGWKHFRDPTMESSYSAVYYWREQMKAMFLYTTSKERQMPYRSS. Residues 60 to 80 traverse the membrane as a helical segment; that stretch reads WHTLVIIQATVCFLTMCYGVT. The Extracellular portion of the chain corresponds to 81–92; it reads ESLGDKVQMGRD. The chain crosses the membrane as a helical span at residues 93-113; sequence IAFIIGFFYIAFKIYYFQWYG. Residues 114–148 are Cytoplasmic-facing; the sequence is DELDEVVEALETFHPWAQKGPGAVDYRTAKRWYFT. The helical transmembrane segment at 149 to 169 threads the bilayer; that stretch reads LAFFLASSWLVFLCIFILLLI. Topologically, residues 170 to 222 are extracellular; the sequence is TSPLWVHQQILPLHAAFPFQWHEKSIHPISHAFIYLFQTWNVMYFLTWLVCIE. A helical transmembrane segment spans residues 223–243; the sequence is GLSVSIYVEITFAIEVLCLEL. At 244-279 the chain is on the cytoplasmic side; sequence RHLHQRCHGYEQLRLETNRLVQFHQKIVHILDHTNK. Residues 280–300 form a helical membrane-spanning segment; that stretch reads VFHGTLIMQMGVNFFLVSLSV. Topologically, residues 301-312 are extracellular; the sequence is LEAMEARKDPKV. The chain crosses the membrane as a helical span at residues 313 to 333; the sequence is VAQFAVLMLLALGHLSMWSYF. Residues 334 to 385 are Cytoplasmic-facing; that stretch reads GDLLSQKSLTISEAAYEAYDPIKGSKDVYRDLCLIIRRGQEPLIMRASPFPS. A helical membrane pass occupies residues 386 to 406; that stretch reads FNFINYSAILNQCYGILTFLL. Residues 407 to 410 are Extracellular-facing; sequence KTLD.

Belongs to the insect chemoreceptor superfamily. Heteromeric odorant receptor channel (TC 1.A.69) family. Or49a subfamily. As to quaternary structure, interacts with Orco. Complexes exist early in the endomembrane system in olfactory sensory neurons (OSNs), coupling these complexes to the conserved ciliary trafficking pathway.

The protein resides in the cell membrane. In terms of biological role, odorant receptor which mediates acceptance or avoidance behavior, depending on its substrates. The odorant receptor repertoire encodes a large collection of odor stimuli that vary widely in identity, intensity, and duration. May form a complex with Orco to form odorant-sensing units, providing sensitive and prolonged odorant signaling and calcium permeability. In Drosophila melanogaster (Fruit fly), this protein is Putative odorant receptor 65c (Or65c).